The chain runs to 507 residues: tRNA-2-methylthio-N(6)-dimethylallyladenosine synthase (507 aa).

The region spanning 13-129 (RTYQVRTYGC…LPALLERARH (117 aa)) is the MTTase N-terminal domain. The [4Fe-4S] cluster site is built by Cys-22, Cys-58, Cys-92, Cys-166, Cys-170, and Cys-173. Residues 152–388 (RESAYAAWVS…IALQESVTLE (237 aa)) form the Radical SAM core domain. The 72-residue stretch at 391–462 (QKQIGRMIEV…PHHLIADDGV (72 aa)) folds into the TRAM domain. The segment covering 459–478 (DDGVRSHRRTRAGDAHEAGK) has biased composition (basic and acidic residues). The disordered stretch occupies residues 459 to 492 (DDGVRSHRRTRAGDAHEAGKKPSTPGIGLGMPAI).

It belongs to the methylthiotransferase family. MiaB subfamily. Monomer. The cofactor is [4Fe-4S] cluster.

It localises to the cytoplasm. It catalyses the reaction N(6)-dimethylallyladenosine(37) in tRNA + (sulfur carrier)-SH + AH2 + 2 S-adenosyl-L-methionine = 2-methylsulfanyl-N(6)-dimethylallyladenosine(37) in tRNA + (sulfur carrier)-H + 5'-deoxyadenosine + L-methionine + A + S-adenosyl-L-homocysteine + 2 H(+). Functionally, catalyzes the methylthiolation of N6-(dimethylallyl)adenosine (i(6)A), leading to the formation of 2-methylthio-N6-(dimethylallyl)adenosine (ms(2)i(6)A) at position 37 in tRNAs that read codons beginning with uridine. The chain is tRNA-2-methylthio-N(6)-dimethylallyladenosine synthase from Mycobacteroides abscessus (strain ATCC 19977 / DSM 44196 / CCUG 20993 / CIP 104536 / JCM 13569 / NCTC 13031 / TMC 1543 / L948) (Mycobacterium abscessus).